We begin with the raw amino-acid sequence, 296 residues long: MGAREILEVSKPRIVLLLVITAVTTMYAGDALSAGEPGPDLWDYAHLMAAGALASAGSSALNHYYDRDIDPKMRRTARRPIPSGRIGENIVLAYGLAISSAAVVYAYFLLNAPTAFFIALGIFSYVIIYTAWLKRTNRSNIVIGGIAGSAASWAGWTAATGTLDLLGFLIGFLVFVWTPSHFWCLAMKIREDYEAAGVPMLPVVIGMQRTSKYILGNTLLLLPYSLALYAFGMGLVYLVIAVASGGLMLVYHYKLTKTPTPDFAWKAYKVTAPYLTIIFAAVALDAAFHYPFPFPF.

8 helical membrane-spanning segments follow: residues 14–34 (IVLL…ALSA), 41–61 (LWDY…SSAL), 86–106 (IGEN…VVYA), 108–128 (FLLN…YVII), 141–161 (IVIG…AATG), 165–185 (LLGF…FWCL), 230–250 (AFGM…LMLV), and 274–294 (YLTI…PFPF).

This sequence belongs to the UbiA prenyltransferase family. Protoheme IX farnesyltransferase subfamily.

It is found in the cell membrane. The enzyme catalyses heme b + (2E,6E)-farnesyl diphosphate + H2O = Fe(II)-heme o + diphosphate. The protein operates within porphyrin-containing compound metabolism; heme O biosynthesis; heme O from protoheme: step 1/1. Its function is as follows. Converts heme B (protoheme IX) to heme O by substitution of the vinyl group on carbon 2 of heme B porphyrin ring with a hydroxyethyl farnesyl side group. This is Protoheme IX farnesyltransferase 1 from Cenarchaeum symbiosum (strain A).